The following is a 338-amino-acid chain: Glycerol-3-phosphate dehydrogenase [NAD(P)+] (338 aa).

The NADPH site is built by S14, Y15, H35, and K109. Sn-glycerol 3-phosphate contacts are provided by K109, G138, and T140. Residue A142 participates in NADPH binding. The sn-glycerol 3-phosphate site is built by K194, D247, S257, R258, and N259. The active-site Proton acceptor is K194. R258 lines the NADPH pocket. Residues V282 and E284 each contribute to the NADPH site.

It belongs to the NAD-dependent glycerol-3-phosphate dehydrogenase family.

It localises to the cytoplasm. The catalysed reaction is sn-glycerol 3-phosphate + NAD(+) = dihydroxyacetone phosphate + NADH + H(+). The enzyme catalyses sn-glycerol 3-phosphate + NADP(+) = dihydroxyacetone phosphate + NADPH + H(+). The protein operates within membrane lipid metabolism; glycerophospholipid metabolism. Catalyzes the reduction of the glycolytic intermediate dihydroxyacetone phosphate (DHAP) to sn-glycerol 3-phosphate (G3P), the key precursor for phospholipid synthesis. The sequence is that of Glycerol-3-phosphate dehydrogenase [NAD(P)+] from Shewanella sp. (strain MR-4).